The chain runs to 115 residues: NAD(P)H-quinone oxidoreductase subunit M (115 aa).

This sequence belongs to the complex I NdhM subunit family. NDH-1 can be composed of about 15 different subunits; different subcomplexes with different compositions have been identified which probably have different functions.

The protein resides in the cellular thylakoid membrane. The enzyme catalyses a plastoquinone + NADH + (n+1) H(+)(in) = a plastoquinol + NAD(+) + n H(+)(out). It catalyses the reaction a plastoquinone + NADPH + (n+1) H(+)(in) = a plastoquinol + NADP(+) + n H(+)(out). Functionally, NDH-1 shuttles electrons from an unknown electron donor, via FMN and iron-sulfur (Fe-S) centers, to quinones in the respiratory and/or the photosynthetic chain. The immediate electron acceptor for the enzyme in this species is believed to be plastoquinone. Couples the redox reaction to proton translocation, and thus conserves the redox energy in a proton gradient. Cyanobacterial NDH-1 also plays a role in inorganic carbon-concentration. This Prochlorococcus marinus (strain MIT 9211) protein is NAD(P)H-quinone oxidoreductase subunit M.